Consider the following 78-residue polypeptide: Large ribosomal subunit protein bL28 (78 aa).

It belongs to the bacterial ribosomal protein bL28 family.

The sequence is that of Large ribosomal subunit protein bL28 from Flavobacterium psychrophilum (strain ATCC 49511 / DSM 21280 / CIP 103535 / JIP02/86).